A 166-amino-acid chain; its full sequence is MSGKIGLYTGSFDPVTNGHMDMIKRASHLFEHVYVGIFNNPNKQSFFTFELRAQMLSEAVCALPNVTVVSAEHGLAVDLARELSVTHLIRGLRNTADFDYEIGLEYFNHRLAPDIETIYLMATHDLQPVSSSRIRELIAFRAPITGLVPQAVINQVEKMNENNKKN.

Position 11 (Ser-11) interacts with substrate. ATP is bound by residues 11–12 (SF) and His-19. Substrate-binding residues include Lys-43, Ala-76, and Arg-90. ATP-binding positions include 91–93 (GLR), Glu-101, and 126–132 (LQPVSSS).

It belongs to the bacterial CoaD family. In terms of assembly, homohexamer. Requires Mg(2+) as cofactor.

Its subcellular location is the cytoplasm. It carries out the reaction (R)-4'-phosphopantetheine + ATP + H(+) = 3'-dephospho-CoA + diphosphate. Its pathway is cofactor biosynthesis; coenzyme A biosynthesis; CoA from (R)-pantothenate: step 4/5. Functionally, reversibly transfers an adenylyl group from ATP to 4'-phosphopantetheine, yielding dephospho-CoA (dPCoA) and pyrophosphate. The sequence is that of Phosphopantetheine adenylyltransferase from Streptococcus equi subsp. equi (strain 4047).